A 95-amino-acid polypeptide reads, in one-letter code: Sec-independent protein translocase protein TatA (95 aa).

A helical membrane pass occupies residues 1-21; it reads MGSMSVWHWVIVAVVVMLLFG. The disordered stretch occupies residues 42–95; it reads GMADDETQPNTATSVPPVGPNDPVRTLPHQGAPGTAPQPPHVQPHVPAGDHKAV.

It belongs to the TatA/E family. As to quaternary structure, the Tat system comprises two distinct complexes: a TatABC complex, containing multiple copies of TatA, TatB and TatC subunits, and a separate TatA complex, containing only TatA subunits. Substrates initially bind to the TatABC complex, which probably triggers association of the separate TatA complex to form the active translocon.

It localises to the cell inner membrane. Part of the twin-arginine translocation (Tat) system that transports large folded proteins containing a characteristic twin-arginine motif in their signal peptide across membranes. TatA could form the protein-conducting channel of the Tat system. This is Sec-independent protein translocase protein TatA from Methylorubrum extorquens (strain PA1) (Methylobacterium extorquens).